The sequence spans 846 residues: uncharacterized protein (846 aa).

6 disordered regions span residues 159-217 (VPTF…INHI), 254-276 (CNLN…SNSN), 332-414 (NKLN…PLSI), 459-501 (GSSI…SNSL), 556-651 (QQQQ…NFND), and 803-846 (TTTT…NKNK). Residues 163–217 (HNQNQNNNNQNNNQNNNNNNNNNNNNNNNNNNNNNNNSQNNNNNQNNNNNHINHI) show a composition bias toward low complexity. The segment covering 355–414 (LQSPNSQSLANSSANISSNALNQSSSSQQQQPQSTSQQQQQQHKMNSSSGNISPPLPLSI) has biased composition (low complexity). Residues 459 to 482 (GSSITPKNLSPLSSSAPNTPKQFA) are compositionally biased toward polar residues. Low complexity-rich tracts occupy residues 483–501 (SLSS…SNSL), 568–642 (QQQQ…QPNN), and 811–846 (NNNN…NKNK).

This is an uncharacterized protein from Dictyostelium discoideum (Social amoeba).